Here is a 122-residue protein sequence, read N- to C-terminus: S-adenosylmethionine decarboxylase proenzyme (122 aa).

The active-site Schiff-base intermediate with substrate; via pyruvic acid is serine 63. The residue at position 63 (serine 63) is a Pyruvic acid (Ser); by autocatalysis. The active-site Proton acceptor; for processing activity is histidine 68. The active-site Proton donor; for catalytic activity is the cysteine 83.

It belongs to the prokaryotic AdoMetDC family. Type 1 subfamily. Heterotetramer of two alpha and two beta chains arranged as a dimer of alpha/beta heterodimers. Requires pyruvate as cofactor. Post-translationally, is synthesized initially as an inactive proenzyme. Formation of the active enzyme involves a self-maturation process in which the active site pyruvoyl group is generated from an internal serine residue via an autocatalytic post-translational modification. Two non-identical subunits are generated from the proenzyme in this reaction, and the pyruvate is formed at the N-terminus of the alpha chain, which is derived from the carboxyl end of the proenzyme. The post-translation cleavage follows an unusual pathway, termed non-hydrolytic serinolysis, in which the side chain hydroxyl group of the serine supplies its oxygen atom to form the C-terminus of the beta chain, while the remainder of the serine residue undergoes an oxidative deamination to produce ammonia and the pyruvoyl group blocking the N-terminus of the alpha chain.

The enzyme catalyses S-adenosyl-L-methionine + H(+) = S-adenosyl 3-(methylsulfanyl)propylamine + CO2. Its pathway is amine and polyamine biosynthesis; S-adenosylmethioninamine biosynthesis; S-adenosylmethioninamine from S-adenosyl-L-methionine: step 1/1. Functionally, catalyzes the decarboxylation of S-adenosylmethionine to S-adenosylmethioninamine (dcAdoMet), the propylamine donor required for the synthesis of the polyamines spermine and spermidine from the diamine putrescine. In Methanococcus maripaludis (strain C7 / ATCC BAA-1331), this protein is S-adenosylmethionine decarboxylase proenzyme.